A 260-amino-acid chain; its full sequence is Ribonuclease HII (260 aa).

In terms of domain architecture, RNase H type-2 spans 75–260 (ELIAGVDEVG…FEPIKSIIKK (186 aa)). Residues Asp-81, Glu-82, and Asp-173 each coordinate a divalent metal cation.

This sequence belongs to the RNase HII family. It depends on Mn(2+) as a cofactor. Requires Mg(2+) as cofactor.

It is found in the cytoplasm. It carries out the reaction Endonucleolytic cleavage to 5'-phosphomonoester.. Its function is as follows. Endonuclease that specifically degrades the RNA of RNA-DNA hybrids. This is Ribonuclease HII from Streptococcus thermophilus (strain CNRZ 1066).